Here is a 185-residue protein sequence, read N- to C-terminus: ATP synthase subunit delta (185 aa).

It belongs to the ATPase delta chain family. F-type ATPases have 2 components, F(1) - the catalytic core - and F(0) - the membrane proton channel. F(1) has five subunits: alpha(3), beta(3), gamma(1), delta(1), epsilon(1). CF(0) has four main subunits: a(1), b(1), b'(1) and c(10-14). The alpha and beta chains form an alternating ring which encloses part of the gamma chain. F(1) is attached to F(0) by a central stalk formed by the gamma and epsilon chains, while a peripheral stalk is formed by the delta, b and b' chains.

It localises to the cellular thylakoid membrane. In terms of biological role, f(1)F(0) ATP synthase produces ATP from ADP in the presence of a proton or sodium gradient. F-type ATPases consist of two structural domains, F(1) containing the extramembraneous catalytic core and F(0) containing the membrane proton channel, linked together by a central stalk and a peripheral stalk. During catalysis, ATP synthesis in the catalytic domain of F(1) is coupled via a rotary mechanism of the central stalk subunits to proton translocation. Its function is as follows. This protein is part of the stalk that links CF(0) to CF(1). It either transmits conformational changes from CF(0) to CF(1) or is implicated in proton conduction. This is ATP synthase subunit delta from Synechocystis sp. (strain ATCC 27184 / PCC 6803 / Kazusa).